The primary structure comprises 71 residues: Protein CYSTEINE-RICH TRANSMEMBRANE MODULE 3 (71 aa).

Residues Val30–Gly49 are disordered. The helical transmembrane segment at Lys48–Cys64 threads the bilayer.

This sequence belongs to the CYSTM1 family. As to quaternary structure, heterodimers. Interacts with CYSTM7 and WIH1/CYSTM13. In terms of tissue distribution, mostly expressed in leaves and flowers and, to a lower extent, in stems, siliques, shoots and roots.

Its subcellular location is the cell membrane. It is found in the cytoplasm. The protein resides in the mitochondrion. Functionally, negatively regulates salt stress responses and Na(+) homeostasis. Prevents Na(+) efflux, disturbs reactive oxygen species (ROS) homeostasis, and represses the expression of nuclear salt stress-responsive genes. Involved in resistance to abiotic stress. The protein is Protein CYSTEINE-RICH TRANSMEMBRANE MODULE 3 of Arabidopsis thaliana (Mouse-ear cress).